Consider the following 640-residue polypeptide: Threonine--tRNA ligase (640 aa).

The TGS domain maps to 1–59; it reads MKIKVKLPDGKEKEYDRGITPAEIAKELGVKKAIGAVVNGELWDLKRPIENDCELRLVT. A catalytic region spans residues 240 to 531; sequence DHRKLGPHLE…LIEHFAGAFP (292 aa). Zn(2+) is bound by residues Cys332, His383, and His508.

The protein belongs to the class-II aminoacyl-tRNA synthetase family. As to quaternary structure, homodimer. It depends on Zn(2+) as a cofactor.

It is found in the cytoplasm. The enzyme catalyses tRNA(Thr) + L-threonine + ATP = L-threonyl-tRNA(Thr) + AMP + diphosphate + H(+). In terms of biological role, catalyzes the attachment of threonine to tRNA(Thr) in a two-step reaction: L-threonine is first activated by ATP to form Thr-AMP and then transferred to the acceptor end of tRNA(Thr). Also edits incorrectly charged L-seryl-tRNA(Thr). The polypeptide is Threonine--tRNA ligase (Thermotoga sp. (strain RQ2)).